We begin with the raw amino-acid sequence, 233 residues long: Antilisterial bacteriocin subtilosin biosynthesis protein AlbG (233 aa).

A run of 5 helical transmembrane segments spans residues Ser4–Val24, Gly46–Val66, Thr116–Val136, Thr145–Met165, and Ile192–Ile212.

Its subcellular location is the cell membrane. Functionally, involved in the production of the bacteriocin subtilosin. The sequence is that of Antilisterial bacteriocin subtilosin biosynthesis protein AlbG (albG) from Bacillus subtilis.